Consider the following 269-residue polypeptide: Bifunctional protein FolD (269 aa).

NADP(+) contacts are provided by residues 149–151 (GLG) and Val215.

It belongs to the tetrahydrofolate dehydrogenase/cyclohydrolase family. As to quaternary structure, homodimer.

The catalysed reaction is (6R)-5,10-methylene-5,6,7,8-tetrahydrofolate + NADP(+) = (6R)-5,10-methenyltetrahydrofolate + NADPH. It carries out the reaction (6R)-5,10-methenyltetrahydrofolate + H2O = (6R)-10-formyltetrahydrofolate + H(+). It participates in one-carbon metabolism; tetrahydrofolate interconversion. In terms of biological role, catalyzes the oxidation of 5,10-methylenetetrahydrofolate to 5,10-methenyltetrahydrofolate and then the hydrolysis of 5,10-methenyltetrahydrofolate to 10-formyltetrahydrofolate. The polypeptide is Bifunctional protein FolD (Mycoplasma pneumoniae (strain ATCC 29342 / M129 / Subtype 1) (Mycoplasmoides pneumoniae)).